The chain runs to 585 residues: Lipoprotein LpqB (585 aa).

The signal sequence occupies residues 1 to 17 (MGRKLLGLLMLAVLLAG). The N-palmitoyl cysteine moiety is linked to residue Cys-18. Cys-18 is lipidated: S-diacylglycerol cysteine. Disordered stretches follow at residues 24–48 (SSAPQAIGTVERPAPSNLPKPTPGM) and 560–585 (PSADGQQGWSEVPGLTVPGAAPVLPG).

This sequence belongs to the LpqB lipoprotein family.

The protein resides in the cell membrane. In Mycolicibacterium paratuberculosis (strain ATCC BAA-968 / K-10) (Mycobacterium paratuberculosis), this protein is Lipoprotein LpqB.